Consider the following 100-residue polypeptide: Urease subunit gamma (100 aa).

The protein belongs to the urease gamma subunit family. In terms of assembly, heterotrimer of UreA (gamma), UreB (beta) and UreC (alpha) subunits. Three heterotrimers associate to form the active enzyme.

It is found in the cytoplasm. The catalysed reaction is urea + 2 H2O + H(+) = hydrogencarbonate + 2 NH4(+). Its pathway is nitrogen metabolism; urea degradation; CO(2) and NH(3) from urea (urease route): step 1/1. In Paracidovorax citrulli (strain AAC00-1) (Acidovorax citrulli), this protein is Urease subunit gamma.